The following is a 207-amino-acid chain: Holliday junction branch migration complex subunit RuvA (207 aa).

The segment at 1–65 (MYDYIRGTLT…ETEHLLYGFH (65 aa)) is domain I. The tract at residues 66-144 (SREERECFRI…DLLPLDSRVE (79 aa)) is domain II. Residues 145-150 (TSQTHT) form a flexible linker region. Positions 150–207 (TTSSCLEEGIQALAALGYSKIAAERMIAEAIKDLPEGSSLTDILPIALKKNFSGVNKD) are domain III.

It belongs to the RuvA family. As to quaternary structure, homotetramer. Forms an RuvA(8)-RuvB(12)-Holliday junction (HJ) complex. HJ DNA is sandwiched between 2 RuvA tetramers; dsDNA enters through RuvA and exits via RuvB. An RuvB hexamer assembles on each DNA strand where it exits the tetramer. Each RuvB hexamer is contacted by two RuvA subunits (via domain III) on 2 adjacent RuvB subunits; this complex drives branch migration. In the full resolvosome a probable DNA-RuvA(4)-RuvB(12)-RuvC(2) complex forms which resolves the HJ.

It localises to the cytoplasm. Functionally, the RuvA-RuvB-RuvC complex processes Holliday junction (HJ) DNA during genetic recombination and DNA repair, while the RuvA-RuvB complex plays an important role in the rescue of blocked DNA replication forks via replication fork reversal (RFR). RuvA specifically binds to HJ cruciform DNA, conferring on it an open structure. The RuvB hexamer acts as an ATP-dependent pump, pulling dsDNA into and through the RuvAB complex. HJ branch migration allows RuvC to scan DNA until it finds its consensus sequence, where it cleaves and resolves the cruciform DNA. The chain is Holliday junction branch migration complex subunit RuvA from Chlamydia pneumoniae (Chlamydophila pneumoniae).